The following is a 282-amino-acid chain: MNDRLFISALRLLPKNALSRAVGALTRWRAPVPVRLAAMRAFARRYGIDLSECPDLDVYRTFGEFFARPLRPGLRPIAPGERVVASPVDGAVSETGRVEAGRLVQAKGIDYPAAALLGDEALAARFAGGAYATLYLAPKDYHRIHFPLGGKVTGWRYVPGKLWPVNPASVRTVRGLFALNERLVTVLETPLGACAVVAVGATVVGRVCAYYDPSIPFTNLPGAAPRRHDYETPIPVEKGQELGAFEMGSTVILLFEPGKARLDPRLAPGVRVRVGEPLGGAA.

Active-site charge relay system; for autoendoproteolytic cleavage activity residues include aspartate 89, histidine 145, and serine 249. Residue serine 249 is the Schiff-base intermediate with substrate; via pyruvic acid; for decarboxylase activity of the active site. Position 249 is a pyruvic acid (Ser); by autocatalysis (serine 249).

This sequence belongs to the phosphatidylserine decarboxylase family. PSD-B subfamily. Prokaryotic type I sub-subfamily. In terms of assembly, heterodimer of a large membrane-associated beta subunit and a small pyruvoyl-containing alpha subunit. It depends on pyruvate as a cofactor. Is synthesized initially as an inactive proenzyme. Formation of the active enzyme involves a self-maturation process in which the active site pyruvoyl group is generated from an internal serine residue via an autocatalytic post-translational modification. Two non-identical subunits are generated from the proenzyme in this reaction, and the pyruvate is formed at the N-terminus of the alpha chain, which is derived from the carboxyl end of the proenzyme. The autoendoproteolytic cleavage occurs by a canonical serine protease mechanism, in which the side chain hydroxyl group of the serine supplies its oxygen atom to form the C-terminus of the beta chain, while the remainder of the serine residue undergoes an oxidative deamination to produce ammonia and the pyruvoyl prosthetic group on the alpha chain. During this reaction, the Ser that is part of the protease active site of the proenzyme becomes the pyruvoyl prosthetic group, which constitutes an essential element of the active site of the mature decarboxylase.

The protein localises to the cell membrane. It carries out the reaction a 1,2-diacyl-sn-glycero-3-phospho-L-serine + H(+) = a 1,2-diacyl-sn-glycero-3-phosphoethanolamine + CO2. It participates in phospholipid metabolism; phosphatidylethanolamine biosynthesis; phosphatidylethanolamine from CDP-diacylglycerol: step 2/2. Its function is as follows. Catalyzes the formation of phosphatidylethanolamine (PtdEtn) from phosphatidylserine (PtdSer). The protein is Phosphatidylserine decarboxylase proenzyme of Anaeromyxobacter sp. (strain K).